A 266-amino-acid chain; its full sequence is Hemin import ATP-binding protein HmuV (266 aa).

The region spanning 2–242 is the ABC transporter domain; sequence IEAVDICVQR…QNLRDVYSCS (241 aa). An ATP-binding site is contributed by 34 to 41; the sequence is GPNGSGKS.

The protein belongs to the ABC transporter superfamily. Heme (hemin) importer (TC 3.A.1.14.5) family. As to quaternary structure, the complex is composed of two ATP-binding proteins (HmuV), two transmembrane proteins (HmuU) and a solute-binding protein (HmuT).

It localises to the cell inner membrane. Functionally, part of the ABC transporter complex HmuTUV involved in hemin import. Responsible for energy coupling to the transport system. This Bartonella henselae (strain ATCC 49882 / DSM 28221 / CCUG 30454 / Houston 1) (Rochalimaea henselae) protein is Hemin import ATP-binding protein HmuV.